We begin with the raw amino-acid sequence, 166 residues long: 3-isopropylmalate dehydratase small subunit (166 aa).

The protein belongs to the LeuD family. LeuD type 2 subfamily. Heterodimer of LeuC and LeuD.

It carries out the reaction (2R,3S)-3-isopropylmalate = (2S)-2-isopropylmalate. It participates in amino-acid biosynthesis; L-leucine biosynthesis; L-leucine from 3-methyl-2-oxobutanoate: step 2/4. Its function is as follows. Catalyzes the isomerization between 2-isopropylmalate and 3-isopropylmalate, via the formation of 2-isopropylmaleate. This Caldicellulosiruptor bescii (strain ATCC BAA-1888 / DSM 6725 / KCTC 15123 / Z-1320) (Anaerocellum thermophilum) protein is 3-isopropylmalate dehydratase small subunit.